Consider the following 439-residue polypeptide: Ribosomal protein uS12 methylthiotransferase RimO (439 aa).

One can recognise an MTTase N-terminal domain in the interval 7–119 (KQLCLISLGC…IDILIAKKQN (113 aa)). Positions 16, 50, 82, 151, 155, and 158 each coordinate [4Fe-4S] cluster. In terms of domain architecture, Radical SAM core spans 137–368 (TGSSVHAYVK…ALKHQNHSFK (232 aa)).

The protein belongs to the methylthiotransferase family. RimO subfamily. Requires [4Fe-4S] cluster as cofactor.

It is found in the cytoplasm. It catalyses the reaction L-aspartate(89)-[ribosomal protein uS12]-hydrogen + (sulfur carrier)-SH + AH2 + 2 S-adenosyl-L-methionine = 3-methylsulfanyl-L-aspartate(89)-[ribosomal protein uS12]-hydrogen + (sulfur carrier)-H + 5'-deoxyadenosine + L-methionine + A + S-adenosyl-L-homocysteine + 2 H(+). In terms of biological role, catalyzes the methylthiolation of an aspartic acid residue of ribosomal protein uS12. The sequence is that of Ribosomal protein uS12 methylthiotransferase RimO from Helicobacter pylori (strain J99 / ATCC 700824) (Campylobacter pylori J99).